Here is a 125-residue protein sequence, read N- to C-terminus: Methylglyoxal synthase (125 aa).

In terms of domain architecture, MGS-like spans 1–125 (MTERLRIALI…TAEKLIKALD (125 aa)). Residues His12, Lys16, 38–41 (TGTT), and 59–60 (SG) contribute to the substrate site. Asp65 acts as the Proton donor/acceptor in catalysis. Residue His92 coordinates substrate.

This sequence belongs to the methylglyoxal synthase family.

The catalysed reaction is dihydroxyacetone phosphate = methylglyoxal + phosphate. Catalyzes the formation of methylglyoxal from dihydroxyacetone phosphate. This Brucella anthropi (strain ATCC 49188 / DSM 6882 / CCUG 24695 / JCM 21032 / LMG 3331 / NBRC 15819 / NCTC 12168 / Alc 37) (Ochrobactrum anthropi) protein is Methylglyoxal synthase.